The following is a 247-amino-acid chain: OCIA domain-containing protein 1 (247 aa).

Residues 1 to 112 enclose the OCIA domain; it reads MNGRADFREP…KKLENSPLGE (112 aa). A phosphoserine mark is found at serine 108, serine 116, and serine 123. 2 disordered regions span residues 113 to 153 and 167 to 230; these read ALRS…ADNI and SASM…MQER. Composition is skewed to polar residues over residues 136–146 and 168–177; these read SNVSGQSSFGT and ASMNESTPTG. Composition is skewed to basic and acidic residues over residues 192–210 and 218–230; these read ESPK…KNRE and HKTD…MQER. At serine 193 the chain carries Phosphoserine.

It belongs to the OCIAD1 family. As to quaternary structure, interacts with OCIAD2. Interacts with STAT3. Expressed at high levels in the brain and at lower levels in the heart, ovary, testis and kidney. Expression is strongest in embryonic stem cells and in the blood vessels.

It is found in the endosome. Maintains stem cell potency. Increases STAT3 phosphorylation and controls ERK phosphorylation. May act as a scaffold, increasing STAT3 recruitment onto endosomes. The sequence is that of OCIA domain-containing protein 1 from Mus musculus (Mouse).